Here is a 404-residue protein sequence, read N- to C-terminus: Probable tRNA sulfurtransferase (404 aa).

One can recognise a THUMP domain in the interval 60 to 165 (QPVAESLKQI…EEAAYISYET (106 aa)). Residues 183-184 (ML), 208-209 (HF), Arg265, Gly287, and Gln296 contribute to the ATP site.

The protein belongs to the ThiI family.

The protein localises to the cytoplasm. The enzyme catalyses [ThiI sulfur-carrier protein]-S-sulfanyl-L-cysteine + a uridine in tRNA + 2 reduced [2Fe-2S]-[ferredoxin] + ATP + H(+) = [ThiI sulfur-carrier protein]-L-cysteine + a 4-thiouridine in tRNA + 2 oxidized [2Fe-2S]-[ferredoxin] + AMP + diphosphate. The catalysed reaction is [ThiS sulfur-carrier protein]-C-terminal Gly-Gly-AMP + S-sulfanyl-L-cysteinyl-[cysteine desulfurase] + AH2 = [ThiS sulfur-carrier protein]-C-terminal-Gly-aminoethanethioate + L-cysteinyl-[cysteine desulfurase] + A + AMP + 2 H(+). The protein operates within cofactor biosynthesis; thiamine diphosphate biosynthesis. Its function is as follows. Catalyzes the ATP-dependent transfer of a sulfur to tRNA to produce 4-thiouridine in position 8 of tRNAs, which functions as a near-UV photosensor. Also catalyzes the transfer of sulfur to the sulfur carrier protein ThiS, forming ThiS-thiocarboxylate. This is a step in the synthesis of thiazole, in the thiamine biosynthesis pathway. The sulfur is donated as persulfide by IscS. In Streptococcus sanguinis (strain SK36), this protein is Probable tRNA sulfurtransferase.